Here is a 734-residue protein sequence, read N- to C-terminus: Photosystem I P700 chlorophyll a apoprotein A2 (734 aa).

The next 8 helical transmembrane spans lie at 46-69 (IFAS…FHVA), 135-158 (LYTG…LHLQ), 175-199 (LNHH…HVAI), 273-291 (MAHH…GHMY), 330-353 (IHFQ…QHMY), 369-395 (AALY…IFFI), 417-439 (AIIS…LYVH), and 517-535 (FLVH…LILV). Residues cysteine 559 and cysteine 568 each coordinate [4Fe-4S] cluster. A run of 2 helical transmembrane segments spans residues 575-596 (AFYL…YWHW) and 643-665 (LSVW…MFLI). 3 residues coordinate chlorophyll a: histidine 654, methionine 662, and tyrosine 670. Tryptophan 671 provides a ligand contact to phylloquinone. Residues 707–727 (LVGLAHFSVGYIFTYAAFLIA) form a helical membrane-spanning segment.

The protein belongs to the PsaA/PsaB family. As to quaternary structure, the PsaA/B heterodimer binds the P700 chlorophyll special pair and subsequent electron acceptors. PSI consists of a core antenna complex that captures photons, and an electron transfer chain that converts photonic excitation into a charge separation. The eukaryotic PSI reaction center is composed of at least 11 subunits. P700 is a chlorophyll a/chlorophyll a' dimer, A0 is one or more chlorophyll a, A1 is one or both phylloquinones and FX is a shared 4Fe-4S iron-sulfur center. is required as a cofactor.

The protein resides in the plastid. It localises to the chloroplast thylakoid membrane. The catalysed reaction is reduced [plastocyanin] + hnu + oxidized [2Fe-2S]-[ferredoxin] = oxidized [plastocyanin] + reduced [2Fe-2S]-[ferredoxin]. Its function is as follows. PsaA and PsaB bind P700, the primary electron donor of photosystem I (PSI), as well as the electron acceptors A0, A1 and FX. PSI is a plastocyanin-ferredoxin oxidoreductase, converting photonic excitation into a charge separation, which transfers an electron from the donor P700 chlorophyll pair to the spectroscopically characterized acceptors A0, A1, FX, FA and FB in turn. Oxidized P700 is reduced on the lumenal side of the thylakoid membrane by plastocyanin. In Lobularia maritima (Sweet alyssum), this protein is Photosystem I P700 chlorophyll a apoprotein A2.